The primary structure comprises 233 residues: Small ribosomal subunit protein uS2c (233 aa).

This sequence belongs to the universal ribosomal protein uS2 family.

It is found in the plastid. It localises to the chloroplast. This chain is Small ribosomal subunit protein uS2c (rps2), found in Staurastrum punctulatum (Green alga).